Here is a 190-residue protein sequence, read N- to C-terminus: Pyridoxal 5'-phosphate synthase subunit PdxT (190 aa).

46–48 (GES) is a binding site for L-glutamine. Catalysis depends on C78, which acts as the Nucleophile. L-glutamine-binding positions include R105 and 138-139 (IR). Residues H174 and E176 each act as charge relay system in the active site.

Belongs to the glutaminase PdxT/SNO family. In terms of assembly, in the presence of PdxS, forms a dodecamer of heterodimers. Only shows activity in the heterodimer.

The enzyme catalyses aldehydo-D-ribose 5-phosphate + D-glyceraldehyde 3-phosphate + L-glutamine = pyridoxal 5'-phosphate + L-glutamate + phosphate + 3 H2O + H(+). It catalyses the reaction L-glutamine + H2O = L-glutamate + NH4(+). It participates in cofactor biosynthesis; pyridoxal 5'-phosphate biosynthesis. In terms of biological role, catalyzes the hydrolysis of glutamine to glutamate and ammonia as part of the biosynthesis of pyridoxal 5'-phosphate. The resulting ammonia molecule is channeled to the active site of PdxS. This chain is Pyridoxal 5'-phosphate synthase subunit PdxT, found in Bifidobacterium longum (strain NCC 2705).